We begin with the raw amino-acid sequence, 128 residues long: MSWAAPDDIFFSTSLAAYLDKKLLVLLRDGRKLMGLLRSFDQFANAVLEEAYERVIVGDLYCDIPLGLYIIRGENVVLIGELDVEKEELPAHMVQVPEAEIKRAQKAEKEEMLLKGTMRKRMEFLDLD.

A Sm domain is found at 10–85; the sequence is FFSTSLAAYL…VVLIGELDVE (76 aa).

Belongs to the snRNP Sm proteins family. Component of the heptameric LSM1-LSM7 complex that forms a seven-membered ring structure with a donut shape. The LSM subunits are arranged in the order LSM1, LSM2, LSM3, LSM6, LSM5, LSM7 and LSM4. LSM1A subunit interacts only with its two neighboring subunits, LSM2 and LSM4. Expressed in roots, leaves, stems, flowers and siliques.

The protein localises to the cytoplasm. It localises to the P-body. In terms of biological role, component of the cytoplasmic LSM1-LSM7 complex which is involved in mRNA degradation by promoting decapping and leading to accurate 5'-3' mRNA decay. LSM1A and LSM1B are essential for the formation of the cytoplasmic LSM1-LSM7 complex which regulates developmental gene expression by the decapping of specific development-related transcripts. Required for P-body formation during heat stress. This is Sm-like protein LSM1A from Arabidopsis thaliana (Mouse-ear cress).